The sequence spans 189 residues: Movement protein (189 aa).

It belongs to the tombusvirus/aureusvirus movement protein p22 family.

It is found in the host membrane. Its function is as follows. Transports viral genome to neighboring plant cells directly through plasmosdesmata, without any budding. The movement protein allows efficient cell to cell propagation, by bypassing the host cell wall barrier. The chain is Movement protein from Cymbidium ringspot virus (CymRSV).